The chain runs to 311 residues: Malate dehydrogenase (311 aa).

NAD(+)-binding positions include 7 to 13 and Asp34; that span reads GAAGGIG. Substrate contacts are provided by Arg81 and Arg87. Residues Asn94 and 117–119 each bind NAD(+); that span reads ITN. Substrate-binding residues include Asn119 and Arg153. The active-site Proton acceptor is the His177. Met227 is an NAD(+) binding site.

This sequence belongs to the LDH/MDH superfamily. MDH type 1 family. Homodimer.

The catalysed reaction is (S)-malate + NAD(+) = oxaloacetate + NADH + H(+). Its function is as follows. Catalyzes the reversible oxidation of malate to oxaloacetate. This is Malate dehydrogenase from Histophilus somni (strain 2336) (Haemophilus somnus).